The following is a 608-amino-acid chain: Histone-arginine methyltransferase CARM1 (608 aa).

The interaction with C9orf72 stretch occupies residues Ala-28–Ser-139. The SAM-dependent MTase PRMT-type domain maps to Ala-147–Val-454. S-adenosyl-L-methionine-binding residues include Gln-160, Arg-169, Gly-193, and Glu-215. Ser-217 bears the Phosphoserine mark. Lys-228 participates in a covalent cross-link: Glycyl lysine isopeptide (Lys-Gly) (interchain with G-Cter in ubiquitin). S-adenosyl-L-methionine-binding residues include Glu-244 and Ser-272. The segment at Arg-347–Leu-380 is required for nuclear translocation. Residues Thr-500–Ser-608 are transactivation domain. Position 551 is a dimethylated arginine (Arg-551).

This sequence belongs to the class I-like SAM-binding methyltransferase superfamily. Protein arginine N-methyltransferase family. Homodimer. Interacts with NR1H4. Interacts with SNRPC. Interacts with the C-terminus of NCOA2/GRIP1, NCO3/ACTR and NCOA1/SRC1. Part of a complex consisting of CARM1, EP300/P300 and NCOA2/GRIP1. Interacts with FLII, TP53, myogenic factor MEF2, EP300/P300, TRIM24, CREBBP and CTNNB1. Interacts with RELA. Identified in a complex containing CARM1, TRIM24 and NCOA2/GRIP1. Interacts with NCOA3/SRC3. Interacts with SKP2. Interacts (via PH domain-like fold) with C9orf72. Interacts with PARP1; promoting PARP1 recruimtent to replication forks. In terms of processing, phosphorylation at Ser-217 is strongly increased during mitosis, and decreases rapidly to a very low, basal level after entry into the G1 phase of the cell cycle. Phosphorylation at Ser-217 interferes with S-adenosyl-L-methionine binding and strongly reduces methyltransferase activity. Phosphorylation at Ser-217 may promote cytosolic location. Post-translationally, auto-methylated on Arg-551. Methylation enhances transcription coactivator activity. Methylation is required for its role in the regulation of pre-mRNA alternative splicing. Ubiquitinated by E3 ubiquitin-protein ligase complex containing FBXO9 at Lys-228; leading to proteasomal degradation. In terms of tissue distribution, ubiquitously expressed. Within the brain, present in proliferating cells from lateral ventricular zone and dentate gyrus (at protein level).

It localises to the nucleus. The protein localises to the cytoplasm. The protein resides in the chromosome. It carries out the reaction L-arginyl-[protein] + 2 S-adenosyl-L-methionine = N(omega),N(omega)-dimethyl-L-arginyl-[protein] + 2 S-adenosyl-L-homocysteine + 2 H(+). With respect to regulation, methylation of H3R17 (H3R17me) by CARM1 is stimulated by preacetylation of H3 'Lys-18' (H3K18ac) H3 'Lys-23' (H3K23ac) by EP300 and blocked by citrullination of H3 'Arg-17' (H3R17ci) by PADI4. Methylates (mono- and asymmetric dimethylation) the guanidino nitrogens of arginyl residues in several proteins involved in DNA packaging, transcription regulation, pre-mRNA splicing, and mRNA stability. Recruited to promoters upon gene activation together with histone acetyltransferases from EP300/P300 and p160 families, methylates histone H3 at 'Arg-17' (H3R17me), forming mainly asymmetric dimethylarginine (H3R17me2a), leading to activation of transcription via chromatin remodeling. During nuclear hormone receptor activation and TCF7L2/TCF4 activation, acts synergically with EP300/P300 and either one of the p160 histone acetyltransferases NCOA1/SRC1, NCOA2/GRIP1 and NCOA3/ACTR or CTNNB1/beta-catenin to activate transcription. During myogenic transcriptional activation, acts together with NCOA3/ACTR as a coactivator for MEF2C. During monocyte inflammatory stimulation, acts together with EP300/P300 as a coactivator for NF-kappa-B. Acts as a coactivator for PPARG, promotes adipocyte differentiation and the accumulation of brown fat tissue. Plays a role in the regulation of pre-mRNA alternative splicing by methylation of splicing factors. Also seems to be involved in p53/TP53 transcriptional activation. Methylates EP300/P300, both at 'Arg-2142', which may loosen its interaction with NCOA2/GRIP1, and at 'Arg-580' and 'Arg-604' in the KIX domain, which impairs its interaction with CREB and inhibits CREB-dependent transcriptional activation. Also methylates arginine residues in RNA-binding proteins PABPC1, ELAVL1 and ELAV4, which may affect their mRNA-stabilizing properties and the half-life of their target mRNAs. Acts as a transcriptional coactivator of ACACA/acetyl-CoA carboxylase by enriching H3R17 methylation at its promoter, thereby positively regulating fatty acid synthesis. Independently of its methyltransferase activity, involved in replication fork progression: promotes PARP1 recruitment to replication forks, leading to poly-ADP-ribosylation of chromatin at replication forks and reduced fork speed. In Mus musculus (Mouse), this protein is Histone-arginine methyltransferase CARM1 (Carm1).